The sequence spans 251 residues: Triosephosphate isomerase (251 aa).

9–11 (NWK) is a binding site for substrate. The Electrophile role is filled by H95. E167 serves as the catalytic Proton acceptor. Substrate contacts are provided by residues G173, S212, and 233–234 (GG).

It belongs to the triosephosphate isomerase family. As to quaternary structure, homodimer.

The protein resides in the cytoplasm. It catalyses the reaction D-glyceraldehyde 3-phosphate = dihydroxyacetone phosphate. The protein operates within carbohydrate biosynthesis; gluconeogenesis. Its pathway is carbohydrate degradation; glycolysis; D-glyceraldehyde 3-phosphate from glycerone phosphate: step 1/1. Functionally, involved in the gluconeogenesis. Catalyzes stereospecifically the conversion of dihydroxyacetone phosphate (DHAP) to D-glyceraldehyde-3-phosphate (G3P). This Pseudomonas putida (strain ATCC 700007 / DSM 6899 / JCM 31910 / BCRC 17059 / LMG 24140 / F1) protein is Triosephosphate isomerase.